We begin with the raw amino-acid sequence, 492 residues long: Lipopolysaccharide biosynthesis protein WzxC (492 aa).

The Cytoplasmic segment spans residues 1–12; sequence MSLREKTISGAK. Residues 13 to 33 form a helical membrane-spanning segment; sequence WSAIATVIIIGLGLVQMTVLA. The Periplasmic portion of the chain corresponds to 34–42; sequence RIIDNHQFG. A helical membrane pass occupies residues 43-63; it reads LLTVSLVIIALADTLSDFGIA. Over 64 to 81 the chain is Cytoplasmic; that stretch reads NSIIQRKEISHLELTTLY. The chain crosses the membrane as a helical span at residues 82–102; it reads WLNVGLGIVVCVAVFLLSDLI. Over 103–104 the chain is Periplasmic; that stretch reads GD. A helical membrane pass occupies residues 105–125; sequence VLNNPDLAPLIKTLSLAFVVI. Residues 126-157 lie on the Cytoplasmic side of the membrane; it reads PHGQQFRALMQKELEFNKIGMIETSAVLAGFT. Residues 158 to 178 traverse the membrane as a helical segment; the sequence is CTVVSAHFWPLAMTAILGYLV. Topologically, residues 179–236 are periplasmic; it reads NSAVRTLLFGYFGRKIYRPGLHFSLASVAPNLRFGAWLTADSIINYLNTNLSTLVLAR. The chain crosses the membrane as a helical span at residues 237–257; that stretch reads ILGAGVAGGYNLAYNVAVVPP. The Cytoplasmic portion of the chain corresponds to 258 to 288; the sequence is MKLNPIITRVLFPAFAKIQDDTEKLRVNFYK. The helical transmembrane segment at 289–309 threads the bilayer; that stretch reads LLSVVGIINFPALLGLMVVSN. Topologically, residues 310 to 322 are periplasmic; that stretch reads NFVPLVFGEKWNS. Residues 323–343 form a helical membrane-spanning segment; sequence IIPVLQLLCVVGLLRSVGNPI. At 344-364 the chain is on the cytoplasmic side; it reads GSLLMAKARVDISFKFNVFKT. Residues 365 to 385 traverse the membrane as a helical segment; that stretch reads FLFIPAIVIGGQMAGAIGVTL. G386 is a topological domain (periplasmic). The helical transmembrane segment at 387–407 threads the bilayer; the sequence is FLLVQIINTILSYFVMIKPVL. At 408 to 417 the chain is on the cytoplasmic side; it reads GSSYRQYILS. Residues 418 to 438 form a helical membrane-spanning segment; the sequence is LWLPFYLSLPTLVVSYALGIV. Residues 439–445 lie on the Periplasmic side of the membrane; the sequence is LKGQLAL. Residues 446–466 form a helical membrane-spanning segment; sequence GMLLAVQIATGVLAFVVMIVL. Residues 467 to 492 are Cytoplasmic-facing; it reads SRHPLVVEVKRQFCRSEKMKMLLRAG.

It belongs to the polysaccharide synthase family.

The protein resides in the cell inner membrane. Its pathway is bacterial outer membrane biogenesis; lipopolysaccharide biosynthesis. The polypeptide is Lipopolysaccharide biosynthesis protein WzxC (wzxC) (Escherichia coli (strain K12)).